A 705-amino-acid polypeptide reads, in one-letter code: Elongation factor G (705 aa).

Positions 7–287 (HLTRNIGIMA…YVCAFLPSPL (281 aa)) constitute a tr-type G domain. Residues 16 to 23 (AHIDAGKT), 84 to 88 (DTPGH), and 138 to 141 (NKMD) each bind GTP. The interval 291-312 (NVVGTNPDTGAEEDRKPSEDDK) is disordered. A compositionally biased stretch (basic and acidic residues) spans 302–312 (EEDRKPSEDDK).

It belongs to the TRAFAC class translation factor GTPase superfamily. Classic translation factor GTPase family. EF-G/EF-2 subfamily.

The protein resides in the cytoplasm. Catalyzes the GTP-dependent ribosomal translocation step during translation elongation. During this step, the ribosome changes from the pre-translocational (PRE) to the post-translocational (POST) state as the newly formed A-site-bound peptidyl-tRNA and P-site-bound deacylated tRNA move to the P and E sites, respectively. Catalyzes the coordinated movement of the two tRNA molecules, the mRNA and conformational changes in the ribosome. In Bacteroides fragilis (strain ATCC 25285 / DSM 2151 / CCUG 4856 / JCM 11019 / LMG 10263 / NCTC 9343 / Onslow / VPI 2553 / EN-2), this protein is Elongation factor G.